The chain runs to 456 residues: uncharacterized protein (456 aa).

The TRAM domain maps to 2–60 (AMRKGKEYELNIEEIEFPSMGIAYHEGLKVYVKHGIPGQKVLARITTKKKDHAKGKIIE). [4Fe-4S] cluster-binding residues include C73, C79, C82, and C162. Positions 288, 317, 338, and 383 each coordinate S-adenosyl-L-methionine. Residue C410 is the Nucleophile of the active site.

Belongs to the class I-like SAM-binding methyltransferase superfamily. RNA M5U methyltransferase family.

This is an uncharacterized protein from Clostridium tetani (strain Massachusetts / E88).